The following is a 229-amino-acid chain: Flagellar L-ring protein (229 aa).

Residues 1–25 (MKQVRLLPSATVRAACAVAVAALAG) form the signal peptide. Residue cysteine 26 is the site of N-palmitoyl cysteine attachment. The S-diacylglycerol cysteine moiety is linked to residue cysteine 26.

This sequence belongs to the FlgH family. The basal body constitutes a major portion of the flagellar organelle and consists of four rings (L,P,S, and M) mounted on a central rod.

The protein resides in the cell outer membrane. The protein localises to the bacterial flagellum basal body. Its function is as follows. Assembles around the rod to form the L-ring and probably protects the motor/basal body from shearing forces during rotation. The sequence is that of Flagellar L-ring protein from Burkholderia vietnamiensis (strain G4 / LMG 22486) (Burkholderia cepacia (strain R1808)).